Consider the following 969-residue polypeptide: Glycine dehydrogenase (decarboxylating) (969 aa).

Lys-716 is subject to N6-(pyridoxal phosphate)lysine.

The protein belongs to the GcvP family. As to quaternary structure, the glycine cleavage system is composed of four proteins: P, T, L and H. The cofactor is pyridoxal 5'-phosphate.

The enzyme catalyses N(6)-[(R)-lipoyl]-L-lysyl-[glycine-cleavage complex H protein] + glycine + H(+) = N(6)-[(R)-S(8)-aminomethyldihydrolipoyl]-L-lysyl-[glycine-cleavage complex H protein] + CO2. Its function is as follows. The glycine cleavage system catalyzes the degradation of glycine. The P protein binds the alpha-amino group of glycine through its pyridoxal phosphate cofactor; CO(2) is released and the remaining methylamine moiety is then transferred to the lipoamide cofactor of the H protein. The protein is Glycine dehydrogenase (decarboxylating) of Shewanella woodyi (strain ATCC 51908 / MS32).